The sequence spans 79 residues: Cell division protein ZapB (79 aa).

The stretch at 4–78 (EVFEKLEAKV…LQALLGKMEE (75 aa)) forms a coiled coil.

The protein belongs to the ZapB family. Homodimer. The ends of the coiled-coil dimer bind to each other, forming polymers. Interacts with FtsZ.

It localises to the cytoplasm. Its function is as follows. Non-essential, abundant cell division factor that is required for proper Z-ring formation. It is recruited early to the divisome by direct interaction with FtsZ, stimulating Z-ring assembly and thereby promoting cell division earlier in the cell cycle. Its recruitment to the Z-ring requires functional FtsA or ZipA. The chain is Cell division protein ZapB from Cronobacter sakazakii (strain ATCC BAA-894) (Enterobacter sakazakii).